The primary structure comprises 371 residues: Peptide chain release factor 2 (371 aa).

Glutamine 247 carries the post-translational modification N5-methylglutamine.

This sequence belongs to the prokaryotic/mitochondrial release factor family. In terms of processing, methylated by PrmC. Methylation increases the termination efficiency of RF2.

Its subcellular location is the cytoplasm. Its function is as follows. Peptide chain release factor 2 directs the termination of translation in response to the peptide chain termination codons UGA and UAA. The polypeptide is Peptide chain release factor 2 (Caulobacter vibrioides (strain ATCC 19089 / CIP 103742 / CB 15) (Caulobacter crescentus)).